Reading from the N-terminus, the 450-residue chain is Signal recognition particle 54 kDa protein (450 aa).

Residues 107 to 114, 188 to 192, and 247 to 250 contribute to the GTP site; these read GIQGSGKT, DTAGR, and TKLD.

This sequence belongs to the GTP-binding SRP family. SRP54 subfamily. Part of the signal recognition particle protein translocation system, which is composed of SRP and FtsY. Archaeal SRP consists of a 7S RNA molecule of 300 nucleotides and two protein subunits: SRP54 and SRP19.

It is found in the cytoplasm. The catalysed reaction is GTP + H2O = GDP + phosphate + H(+). Functionally, involved in targeting and insertion of nascent membrane proteins into the cytoplasmic membrane. Binds to the hydrophobic signal sequence of the ribosome-nascent chain (RNC) as it emerges from the ribosomes. The SRP-RNC complex is then targeted to the cytoplasmic membrane where it interacts with the SRP receptor FtsY. In Methanococcus vannielii (strain ATCC 35089 / DSM 1224 / JCM 13029 / OCM 148 / SB), this protein is Signal recognition particle 54 kDa protein.